Here is a 424-residue protein sequence, read N- to C-terminus: UDP-N-acetylglucosamine 1-carboxyvinyltransferase (424 aa).

22-23 lines the phosphoenolpyruvate pocket; that stretch reads KN. Arg93 is a binding site for UDP-N-acetyl-alpha-D-glucosamine. The active-site Proton donor is the Cys117. 2-(S-cysteinyl)pyruvic acid O-phosphothioketal is present on Cys117. Residues 162–165, Asp307, and Ile329 contribute to the UDP-N-acetyl-alpha-D-glucosamine site; that span reads KVSV.

It belongs to the EPSP synthase family. MurA subfamily.

It is found in the cytoplasm. It carries out the reaction phosphoenolpyruvate + UDP-N-acetyl-alpha-D-glucosamine = UDP-N-acetyl-3-O-(1-carboxyvinyl)-alpha-D-glucosamine + phosphate. The protein operates within cell wall biogenesis; peptidoglycan biosynthesis. In terms of biological role, cell wall formation. Adds enolpyruvyl to UDP-N-acetylglucosamine. This chain is UDP-N-acetylglucosamine 1-carboxyvinyltransferase, found in Actinobacillus pleuropneumoniae serotype 7 (strain AP76).